The following is a 313-amino-acid chain: Glutathione synthetase (313 aa).

The ATP-grasp domain occupies 125–309 (KIFVTEFADL…IASLFWDAVE (185 aa)). 151–207 (RKEFGDIIVKPLYGNGGAGIFHLHEADRNLASLLEMFGQLFREPYIVQRYLKDVRKG) contacts ATP. The Mg(2+) site is built by Glu280 and Asn282.

The protein belongs to the prokaryotic GSH synthase family. Mg(2+) serves as cofactor. The cofactor is Mn(2+).

The enzyme catalyses gamma-L-glutamyl-L-cysteine + glycine + ATP = glutathione + ADP + phosphate + H(+). It participates in sulfur metabolism; glutathione biosynthesis; glutathione from L-cysteine and L-glutamate: step 2/2. The sequence is that of Glutathione synthetase from Mesorhizobium japonicum (strain LMG 29417 / CECT 9101 / MAFF 303099) (Mesorhizobium loti (strain MAFF 303099)).